The following is a 328-amino-acid chain: tRNA uridine(34) hydroxylase (328 aa).

Residues 130–224 enclose the Rhodanese domain; the sequence is LDEDTVVLDT…YGKDPEVQGE (95 aa). Cys-184 (cysteine persulfide intermediate) is an active-site residue.

Belongs to the TrhO family.

It catalyses the reaction uridine(34) in tRNA + AH2 + O2 = 5-hydroxyuridine(34) in tRNA + A + H2O. In terms of biological role, catalyzes oxygen-dependent 5-hydroxyuridine (ho5U) modification at position 34 in tRNAs. This is tRNA uridine(34) hydroxylase from Streptococcus pyogenes serotype M6 (strain ATCC BAA-946 / MGAS10394).